We begin with the raw amino-acid sequence, 246 residues long: MTSSLSRPSGRRADELRKVALTRHYTKHAEGSVLVEFGDTKVICTASVAERVPEFLRDRGQGWLTAEYGMLPRATHTRSDREAARGKQTGRTQEIQRLIGRALRAVFDLEALGPRTIHIDCDVIQADGGTRTASITGAFVAAHDAVSKLIAAGKLARSPITDHVAAISVGVYEGVPLLDLDYAEDSRCDTDMNVVMTGAGGFVEVQGTAEGVPFSRAEMNALLDLAQSGIGQLVQLQKDVLGAGHV.

Residues Arg-91 and 129–131 (GTR) contribute to the phosphate site.

This sequence belongs to the RNase PH family. In terms of assembly, homohexameric ring arranged as a trimer of dimers.

The catalysed reaction is tRNA(n+1) + phosphate = tRNA(n) + a ribonucleoside 5'-diphosphate. In terms of biological role, phosphorolytic 3'-5' exoribonuclease that plays an important role in tRNA 3'-end maturation. Removes nucleotide residues following the 3'-CCA terminus of tRNAs; can also add nucleotides to the ends of RNA molecules by using nucleoside diphosphates as substrates, but this may not be physiologically important. Probably plays a role in initiation of 16S rRNA degradation (leading to ribosome degradation) during starvation. In Burkholderia ambifaria (strain MC40-6), this protein is Ribonuclease PH.